The following is a 341-amino-acid chain: Heme A synthase (341 aa).

Helical transmembrane passes span 7 to 27 (VTVW…IGGI), 92 to 112 (LFGR…AITK), 118 to 138 (MVAK…MGWF), 159 to 179 (LFLT…CAGV), 190 to 210 (FFTA…GALV), 253 to 273 (FLHR…PFWL), 280 to 300 (LFLA…VSVV), and 302 to 322 (IFLA…GVHM). Residue histidine 255 coordinates heme. Histidine 308 is a heme binding site.

It belongs to the COX15/CtaA family. Type 2 subfamily. Interacts with CtaB. Heme b serves as cofactor.

Its subcellular location is the cell membrane. It catalyses the reaction Fe(II)-heme o + 2 A + H2O = Fe(II)-heme a + 2 AH2. It functions in the pathway porphyrin-containing compound metabolism; heme A biosynthesis; heme A from heme O: step 1/1. Its function is as follows. Catalyzes the conversion of heme O to heme A by two successive hydroxylations of the methyl group at C8. The first hydroxylation forms heme I, the second hydroxylation results in an unstable dihydroxymethyl group, which spontaneously dehydrates, resulting in the formyl group of heme A. This chain is Heme A synthase, found in Anaplasma marginale (strain St. Maries).